Reading from the N-terminus, the 420-residue chain is Glutamyl-tRNA reductase (420 aa).

Residues 49–52, Ser-107, 112–114, and Gln-118 contribute to the substrate site; these read TCNR and EPQ. Cys-50 serves as the catalytic Nucleophile. NADP(+) is bound at residue 187–192; that stretch reads GAGETI.

It belongs to the glutamyl-tRNA reductase family. As to quaternary structure, homodimer.

It catalyses the reaction (S)-4-amino-5-oxopentanoate + tRNA(Glu) + NADP(+) = L-glutamyl-tRNA(Glu) + NADPH + H(+). It functions in the pathway porphyrin-containing compound metabolism; protoporphyrin-IX biosynthesis; 5-aminolevulinate from L-glutamyl-tRNA(Glu): step 1/2. Catalyzes the NADPH-dependent reduction of glutamyl-tRNA(Glu) to glutamate 1-semialdehyde (GSA). This chain is Glutamyl-tRNA reductase, found in Photobacterium profundum (strain SS9).